The chain runs to 933 residues: Phosphoenolpyruvate carboxylase (933 aa).

Residues H164 and K595 contribute to the active site.

This sequence belongs to the PEPCase type 1 family. Mg(2+) is required as a cofactor.

It carries out the reaction oxaloacetate + phosphate = phosphoenolpyruvate + hydrogencarbonate. In terms of biological role, forms oxaloacetate, a four-carbon dicarboxylic acid source for the tricarboxylic acid cycle. The sequence is that of Phosphoenolpyruvate carboxylase from Rhodopseudomonas palustris (strain HaA2).